A 246-amino-acid chain; its full sequence is MADS-box protein EJ2 (246 aa).

One can recognise an MADS-box domain in the interval Met-1 to Ser-61. One can recognise a K-box domain in the interval Thr-87–Gly-177.

It localises to the nucleus. Functionally, MADS-box transcription factor that acts redundantly with J2 to control meristem maturation and inflorescence architecture. This chain is MADS-box protein EJ2, found in Solanum lycopersicum (Tomato).